The chain runs to 313 residues: Ribonuclease HIII (313 aa).

Positions 94 to 310 constitute an RNase H type-2 domain; that stretch reads MSVIGSDEVG…TQKAKRLVER (217 aa). A divalent metal cation is bound by residues Asp100, Glu101, and Asp205.

Belongs to the RNase HII family. RnhC subfamily. Requires Mn(2+) as cofactor. Mg(2+) serves as cofactor.

The protein resides in the cytoplasm. The enzyme catalyses Endonucleolytic cleavage to 5'-phosphomonoester.. Endonuclease that specifically degrades the RNA of RNA-DNA hybrids. This Bacillus velezensis (strain DSM 23117 / BGSC 10A6 / LMG 26770 / FZB42) (Bacillus amyloliquefaciens subsp. plantarum) protein is Ribonuclease HIII.